We begin with the raw amino-acid sequence, 67 residues long: MSKLGILLTICLLLFPLTAVPLDGDQPADRPAERMQDDISSEHHPFFDPVKRCCRLSCGLGCHPCCG.

An N-terminal signal peptide occupies residues 1-19 (MSKLGILLTICLLLFPLTA). Positions 20–52 (VPLDGDQPADRPAERMQDDISSEHHPFFDPVKR) are excised as a propeptide. 3 cysteine pairs are disulfide-bonded: C53/C65, C54/C62, and C58/C66. Residue P64 is modified to 4-hydroxyproline; partial. C66 bears the Cysteine amide; partial mark.

Belongs to the conotoxin M superfamily. Has been found to be hydroxylated and amidated by Han et al. (2006), and to be unmodified by Ju et al. (2022). As to expression, expressed by the venom duct.

The protein resides in the secreted. The protein is Conotoxin mr3d of Conus marmoreus (Marble cone).